Consider the following 533-residue polypeptide: Sterol 26-hydroxylase, mitochondrial (533 aa).

Residues 1-32 (MAAWSRTRLRWTLLDPRVVGRGLCPQGARAKA) constitute a mitochondrion transit peptide. Positions 34 to 60 (IPAALQAQESTEGPGTGQDRPRLRSPA) are disordered. Lys-142, Lys-232, Lys-285, Lys-296, and Lys-375 each carry N6-acetyllysine. The segment at 386–400 (PLLKAVIKETLRLYP) is sterol-binding. Cys-479 contributes to the heme binding site. Residues Lys-512 and Lys-523 each carry the N6-acetyllysine modification.

Belongs to the cytochrome P450 family. Interacts with HSP70; this interaction is required for initial targeting to mitochondria. It depends on heme as a cofactor. Post-translationally, acetylation of Lys-125 and Lys-285 is observed in liver mitochondria from fasted mice but not from fed mice. Expressed in the gray and white matter of cerebellum (at protein level).

The protein localises to the mitochondrion inner membrane. The catalysed reaction is 5beta-cholestane-3alpha,7alpha,12alpha-triol + 6 reduced [adrenodoxin] + 3 O2 + 5 H(+) = (25R)-3alpha,7alpha,12alpha-trihydroxy-5beta-cholestan-26-oate + 6 oxidized [adrenodoxin] + 4 H2O. The enzyme catalyses cholestanol + 2 reduced [adrenodoxin] + O2 + 2 H(+) = (25R)-26-hydroxycholestanol + 2 oxidized [adrenodoxin] + H2O. It catalyses the reaction (25R)-3beta-hydroxycholest-5-en-7-one-26-al + 2 reduced [adrenodoxin] + O2 + H(+) = (25R)-3beta-hydroxycholest-5-en-7-one-26-oate + 2 oxidized [adrenodoxin] + H2O. It carries out the reaction (25R)-3beta,26-dihydroxycholest-5-en-7-one + 2 reduced [adrenodoxin] + O2 + 2 H(+) = (25R)-3beta-hydroxycholest-5-en-7-one-26-al + 2 oxidized [adrenodoxin] + 2 H2O. The catalysed reaction is 7-oxocholesterol + 2 reduced [adrenodoxin] + O2 + 2 H(+) = (25R)-3beta,26-dihydroxycholest-5-en-7-one + 2 oxidized [adrenodoxin] + H2O. The enzyme catalyses calciol + 2 reduced [adrenodoxin] + O2 + 2 H(+) = calcidiol + 2 oxidized [adrenodoxin] + H2O. It catalyses the reaction (25R)-5beta-cholestane-3alpha,7alpha,12alpha,26-tetrol + 2 reduced [adrenodoxin] + O2 + 2 H(+) = (25R)-3alpha,7alpha,12alpha-trihydroxy-5beta-cholestan-26-al + 2 oxidized [adrenodoxin] + 2 H2O. It carries out the reaction 2 reduced [adrenodoxin] + cholesterol + O2 + 2 H(+) = (25R)-cholest-5-ene-3beta,26-diol + 2 oxidized [adrenodoxin] + H2O. The catalysed reaction is (25R)-3beta,4beta-dihydroxycholest-5-en-26-al + 2 reduced [adrenodoxin] + O2 + H(+) = (25R)-3beta,4beta-dihydroxycholest-5-en-26-oate + 2 oxidized [adrenodoxin] + H2O. The enzyme catalyses (25R)-4beta,26-dihydroxycholesterol + 2 reduced [adrenodoxin] + O2 + 2 H(+) = (25R)-3beta,4beta-dihydroxycholest-5-en-26-al + 2 oxidized [adrenodoxin] + 2 H2O. It catalyses the reaction 4beta-hydroxycholesterol + 2 reduced [adrenodoxin] + O2 + 2 H(+) = (25R)-4beta,26-dihydroxycholesterol + 2 oxidized [adrenodoxin] + H2O. It carries out the reaction (25R)-3beta-hydroxy-5-cholesten-26-al + 2 reduced [adrenodoxin] + O2 + H(+) = (25R)-3beta-hydroxy-5-cholestenoate + 2 oxidized [adrenodoxin] + H2O. The catalysed reaction is (25R)-cholest-5-ene-3beta,26-diol + 2 reduced [adrenodoxin] + O2 + 2 H(+) = (25R)-3beta-hydroxy-5-cholesten-26-al + 2 oxidized [adrenodoxin] + 2 H2O. The enzyme catalyses (25R)-3alpha,7alpha,12alpha-trihydroxy-5beta-cholestan-26-al + 2 reduced [adrenodoxin] + O2 + H(+) = (25R)-3alpha,7alpha,12alpha-trihydroxy-5beta-cholestan-26-oate + 2 oxidized [adrenodoxin] + H2O. It catalyses the reaction 5beta-cholestane-3alpha,7alpha,12alpha-triol + 2 reduced [adrenodoxin] + O2 + 2 H(+) = (25R)-5beta-cholestane-3alpha,7alpha,12alpha,26-tetrol + 2 oxidized [adrenodoxin] + H2O. It participates in hormone biosynthesis; cholecalciferol biosynthesis. It functions in the pathway steroid metabolism; cholesterol degradation. The protein operates within lipid metabolism; bile acid biosynthesis. Functionally, cytochrome P450 monooxygenase that catalyzes regio- and stereospecific hydroxylation of cholesterol and its derivatives. Hydroxylates (with R stereochemistry) the terminal methyl group of cholesterol side-chain in a three step reaction to yield at first a C26 alcohol, then a C26 aldehyde and finally a C26 acid. Regulates cholesterol homeostasis by catalyzing the conversion of excess cholesterol to bile acids via both the 'neutral' (classic) and the 'acid' (alternative) pathways. May also regulate cholesterol homeostasis via generation of active oxysterols, which act as ligands for NR1H2 and NR1H3 nuclear receptors, modulating the transcription of genes involved in lipid metabolism. Plays a role in cholestanol metabolism in the cerebellum. Similarly to cholesterol, hydroxylates cholestanol and may facilitate sterol diffusion through the blood-brain barrier to the systemic circulation for further degradation. Also hydroxylates retinal 7-ketocholesterol, a noxious oxysterol with pro-inflammatory and pro-apoptotic effects, and may play a role in its elimination from the retinal pigment epithelium. May play a redundant role in vitamin D biosynthesis. Catalyzes 25-hydroxylation of vitamin D3 that is required for its conversion to a functionally active form. The sequence is that of Sterol 26-hydroxylase, mitochondrial from Mus musculus (Mouse).